We begin with the raw amino-acid sequence, 479 residues long: Glutamate--tRNA ligase (479 aa).

The 'HIGH' region signature appears at 9–19 (PSPTGNLHIGT). The 'KMSKS' region motif lies at 243–247 (KLSKR). Lys-246 contributes to the ATP binding site.

It belongs to the class-I aminoacyl-tRNA synthetase family. Glutamate--tRNA ligase type 1 subfamily. In terms of assembly, monomer.

It is found in the cytoplasm. It carries out the reaction tRNA(Glu) + L-glutamate + ATP = L-glutamyl-tRNA(Glu) + AMP + diphosphate. Catalyzes the attachment of glutamate to tRNA(Glu) in a two-step reaction: glutamate is first activated by ATP to form Glu-AMP and then transferred to the acceptor end of tRNA(Glu). The chain is Glutamate--tRNA ligase from Synechococcus sp. (strain JA-3-3Ab) (Cyanobacteria bacterium Yellowstone A-Prime).